The sequence spans 169 residues: Large ribosomal subunit protein uL10 (169 aa).

It belongs to the universal ribosomal protein uL10 family. As to quaternary structure, part of the ribosomal stalk of the 50S ribosomal subunit. The N-terminus interacts with L11 and the large rRNA to form the base of the stalk. The C-terminus forms an elongated spine to which L12 dimers bind in a sequential fashion forming a multimeric L10(L12)X complex.

In terms of biological role, forms part of the ribosomal stalk, playing a central role in the interaction of the ribosome with GTP-bound translation factors. In Rickettsia bellii (strain OSU 85-389), this protein is Large ribosomal subunit protein uL10.